A 595-amino-acid polypeptide reads, in one-letter code: MKFFSYILVYRRFLFVVFTVLVLLPLPIVLHTKEAECAYTLFVVATFWLTEALPLSVTALLPSLMLPMFGIMPSKKVASAYFKDFHLLLIGVICLATSIEKWNLHKRIALKMVMMVGVNPAWLTLGFMSSTAFLSMWLSNTSTAAMVMPIAEAVVQQIINAEAEVEATQMTYFNGSTNHGLEIDESVNGHEINERKEKTKPVPGYNNDTGKISSKVELEKNSGMRTKYRTKKGHVTRKLTCLCIAYSSTIGGLTTITGTSTNLIFAEYFNTRYPDCRCLNFGSWFTFSFPAALIILLLSWIWLQWLFLGFNFKEMFKCGKTKTVQQKACAEVIKQEYQKLGPIRYQEIVTLVLFIIMALLWFSRDPGFVPGWSALFSEYPGFATDSTVALLIGLLFFLIPAKTLTKTTPTGEIVAFDYSPLITWKEFQSFMPWDIAILVGGGFALADGCEESGLSKWIGNKLSPLGSLPAWLIILISSLMVTSLTEVASNPATITLFLPILSPLAEAIHVNPLYILIPSTLCTSFAFLLPVANPPNAIVFSYGHLKVIDMVKAGLGVNIVGVAVVMLGICTWIVPMFDLYTYPSWAPAMSNETMP.

5 helical membrane-spanning segments follow: residues 13–33, 41–61, 77–97, 108–128, and 131–151; these read FLFV…LHTK, LFVV…TALL, VASA…CLAT, IALK…LGFM, and TAFL…MPIA. Asparagine 174 and asparagine 207 each carry an N-linked (GlcNAc...) asparagine glycan. 8 consecutive transmembrane segments (helical) span residues 239–259, 290–310, 348–368, 381–401, 464–484, 491–511, 512–532, and 554–574; these read LTCL…ITGT, PAAL…FLGF, IVTL…DPGF, GFAT…LIPA, PLGS…VTSL, PATI…IHVN, PLYI…LPVA, and GLGV…TWIV. Residue asparagine 591 is glycosylated (N-linked (GlcNAc...) asparagine).

The protein belongs to the SLC13A/DASS transporter (TC 2.A.47) family. NADC subfamily. Highly expressed in kidney; not detectable in the other tissues tested.

The protein localises to the apical cell membrane. The catalysed reaction is sulfate(out) + 3 Na(+)(out) = sulfate(in) + 3 Na(+)(in). The enzyme catalyses selenate(out) + 3 Na(+)(out) = selenate(in) + 3 Na(+)(in). It carries out the reaction thiosulfate(out) + 3 Na(+)(out) = thiosulfate(in) + 3 Na(+)(in). Its activity is regulated as follows. Inhibited by thiosulfate, selenate, molybdate, tungstate, citrate and succinate. Functionally, sodium:sulfate symporter that mediates sulfate reabsorption in the kidney and small intestine. Can also mediate the transport of selenate and thiosulfate. This Homo sapiens (Human) protein is Solute carrier family 13 member 1 (SLC13A1).